The sequence spans 271 residues: TIP41-like protein (271 aa).

Lys-106 carries the N6-acetyllysine modification. The interval 173–271 is interaction with PPP2CA; the sequence is RVMPSSFFLL…PVDSQSTPSE (99 aa). Phosphoserine is present on residues Ser-265 and Ser-270.

Belongs to the TIP41 family. In terms of assembly, interacts with PPP2CA. Interacts with PPP2CB, PPP4C and PPP6C. Interacts with IGBP1; the interaction is dependent on PPP2CA. Associates with a protein phosphatase 2A PP2A(C):IGBP1 complex. Interacts with PPP4C and PPP4R2.

The protein localises to the cytoplasm. In terms of biological role, may be a allosteric regulator of serine/threonine-protein phosphatase 2A (PP2A). Inhibits catalytic activity of the PP2A(D) core complex in vitro. The PP2A(C):TIPRL complex does not show phosphatase activity. Acts as a negative regulator of serine/threonine-protein phosphatase 4 probably by inhibiting the formation of the active PPP4C:PPP4R2 complex; the function is proposed to implicate it in DNA damage response by promoting H2AX phosphorylated on Ser-140 (gamma-H2AX). May play a role in the regulation of ATM/ATR signaling pathway controlling DNA replication and repair. The polypeptide is TIP41-like protein (Tiprl) (Mus musculus (Mouse)).